Reading from the N-terminus, the 491-residue chain is Cysteine--tRNA ligase (491 aa).

Cys31 provides a ligand contact to Zn(2+). Positions 33-43 (PTVYGDAHLGH) match the 'HIGH' region motif. Zn(2+) is bound by residues Cys226, His251, and Glu255. Positions 283–287 (KMGKS) match the 'KMSKS' region motif. An ATP-binding site is contributed by Lys286.

The protein belongs to the class-I aminoacyl-tRNA synthetase family. Monomer. Zn(2+) serves as cofactor.

The protein resides in the cytoplasm. It catalyses the reaction tRNA(Cys) + L-cysteine + ATP = L-cysteinyl-tRNA(Cys) + AMP + diphosphate. This is Cysteine--tRNA ligase from Parabacteroides distasonis (strain ATCC 8503 / DSM 20701 / CIP 104284 / JCM 5825 / NCTC 11152).